Consider the following 1048-residue polypeptide: Bifunctional heparan sulfate N-deacetylase/N-sulfotransferase (1048 aa).

Topologically, residues 1–172 are cytoplasmic; sequence MTISGGNQHN…RRCFGINVRR (172 aa). The chain crosses the membrane as a helical; Signal-anchor for type II membrane protein span at residues 173 to 192; it reads CVLALLAITMVSIFYYTHYV. Positions 192–752 are heparan sulfate N-deacetylase; the sequence is VDTGVFNGLI…VRHKKIWSKT (561 aa). Residues 193–1048 lie on the Lumenal side of the membrane; that stretch reads DTGVFNGLIQ…WLKDDLSTGT (856 aa). 2 N-linked (GlcNAc...) asparagine glycosylation sites follow: Asn388 and Asn555. The heparan sulfate N-sulfotransferase stretch occupies residues 753–1048; the sequence is KNCDSLPKFL…WLKDDLSTGT (296 aa). The For sulfotransferase activity role is filled by Lys768. 768 to 772 provides a ligand contact to 3'-phosphoadenylyl sulfate; it reads KTGTT. A glycan (N-linked (GlcNAc...) asparagine) is linked at Asn823. Ser877 provides a ligand contact to 3'-phosphoadenylyl sulfate. N-linked (GlcNAc...) asparagine glycosylation occurs at Asn892. Cys983 and Cys993 form a disulfide bridge. 998-1002 serves as a coordination point for 3'-phosphoadenylyl sulfate; sequence KGRQY.

This sequence belongs to the sulfotransferase 1 family. NDST subfamily. As to quaternary structure, monomer.

It localises to the golgi apparatus membrane. The enzyme catalyses alpha-D-glucosaminyl-[heparan sulfate](n) + 3'-phosphoadenylyl sulfate = N-sulfo-alpha-D-glucosaminyl-[heparan sulfate](n) + adenosine 3',5'-bisphosphate + 2 H(+). Its pathway is glycan metabolism; heparan sulfate biosynthesis. It functions in the pathway glycan metabolism; heparin biosynthesis. In terms of biological role, essential bifunctional enzyme that catalyzes both the N-deacetylation and the N-sulfation of glucosamine (GlcNAc) of the glycosaminoglycan in heparan sulfate. Modifies the GlcNAc-GlcA disaccharide repeating sugar backbone to make N-sulfated heparosan, a prerequisite substrate for later modifications in heparin biosynthesis. Plays a role in diffusion of morphogen wingless (wg) via its role in heparan sulfate proteoglycans (HSPGs) biosynthesis, HSPGs being required for movement of wg morphogens. Required for wg signaling during both embryonic and imaginal disk development. Also required for FGF receptor signaling. This Drosophila melanogaster (Fruit fly) protein is Bifunctional heparan sulfate N-deacetylase/N-sulfotransferase (sfl).